The sequence spans 295 residues: Sulfotransferase 1E1 (295 aa).

A 3'-phosphoadenylyl sulfate-binding site is contributed by Lys48–Trp53. Substrate is bound at residue Lys106 to His108. The active-site Proton acceptor is His108. 3'-phosphoadenylyl sulfate contacts are provided by Arg130 and Ser138. Ser156 carries the phosphoserine modification. 3'-phosphoadenylyl sulfate is bound by residues Tyr193, Thr227 to Met232, and Arg257 to Gly259.

Belongs to the sulfotransferase 1 family. As to quaternary structure, homodimer. In terms of tissue distribution, liver of young mature males and uterus.

The protein resides in the cytoplasm. Its subcellular location is the cytosol. The catalysed reaction is estrone + 3'-phosphoadenylyl sulfate = estrone 3-sulfate + adenosine 3',5'-bisphosphate + H(+). It catalyses the reaction (24S)-hydroxycholesterol + 3'-phosphoadenylyl sulfate = (24S)-hydroxycholesterol 3-sulfate + adenosine 3',5'-bisphosphate + H(+). It carries out the reaction 17beta-estradiol + 3'-phosphoadenylyl sulfate = 17beta-estradiol 3-sulfate + adenosine 3',5'-bisphosphate + H(+). The enzyme catalyses 3beta-hydroxyandrost-5-en-17-one + 3'-phosphoadenylyl sulfate = dehydroepiandrosterone 3-sulfate + adenosine 3',5'-bisphosphate + H(+). The catalysed reaction is 4-ethylphenol + 3'-phosphoadenylyl sulfate = 4-ethylphenyl sulfate + adenosine 3',5'-bisphosphate + H(+). Inhibited by estradiol. Its function is as follows. Sulfotransferase that utilizes 3'-phospho-5'-adenylyl sulfate (PAPS) as sulfonate donor to catalyze the sulfate conjugation of estradiol and estrone. Is a key enzyme in estrogen homeostasis, the sulfation of estrogens leads to their inactivation. Also sulfates dehydroepiandrosterone (DHEA), pregnenolone, (24S)-hydroxycholesterol and xenobiotic compounds like ethinylestradiol, equalenin, diethyl stilbesterol and 1-naphthol at significantly lower efficiency. Does not sulfonate cortisol, testosterone and dopamine. May play a role in gut microbiota-host metabolic interaction. O-sulfonates 4-ethylphenol (4-EP), a dietary tyrosine-derived metabolite produced by gut bacteria. The product 4-EPS crosses the blood-brain barrier and may negatively regulate oligodendrocyte maturation and myelination, affecting the functional connectivity of different brain regions associated with the limbic system. The chain is Sulfotransferase 1E1 from Rattus norvegicus (Rat).